We begin with the raw amino-acid sequence, 399 residues long: Subtilisin-like protease CPC735_033790 (399 aa).

The N-terminal stretch at 1–20 (MGFLSSAILLLITAFPAAQA) is a signal peptide. The propeptide occupies 21–117 (GEMINAAAGA…VEPDRMVNIT (97 aa)). One can recognise an Inhibitor I9 domain in the interval 37-116 (SYIVVMNEGI…YVEPDRMVNI (80 aa)). Residue asparagine 115 is glycosylated (N-linked (GlcNAc...) asparagine). A Peptidase S8 domain is found at 127–399 (SYGLGRISNK…NRLLYNNSGV (273 aa)). Residues aspartate 159 and histidine 190 each act as charge relay system in the active site. N-linked (GlcNAc...) asparagine glycosylation occurs at asparagine 251. Residue serine 345 is the Charge relay system of the active site. Residue asparagine 395 is glycosylated (N-linked (GlcNAc...) asparagine).

It belongs to the peptidase S8 family.

Its subcellular location is the secreted. Functionally, secreted subtilisin-like serine protease with keratinolytic activity that contributes to pathogenicity. This chain is Subtilisin-like protease CPC735_033790, found in Coccidioides posadasii (strain C735) (Valley fever fungus).